Reading from the N-terminus, the 284-residue chain is Bifunctional protein FolD (284 aa).

NADP(+)-binding positions include 163–165 (GRS), Ser188, and Ile229.

Belongs to the tetrahydrofolate dehydrogenase/cyclohydrolase family. As to quaternary structure, homodimer.

It catalyses the reaction (6R)-5,10-methylene-5,6,7,8-tetrahydrofolate + NADP(+) = (6R)-5,10-methenyltetrahydrofolate + NADPH. The enzyme catalyses (6R)-5,10-methenyltetrahydrofolate + H2O = (6R)-10-formyltetrahydrofolate + H(+). It participates in one-carbon metabolism; tetrahydrofolate interconversion. Catalyzes the oxidation of 5,10-methylenetetrahydrofolate to 5,10-methenyltetrahydrofolate and then the hydrolysis of 5,10-methenyltetrahydrofolate to 10-formyltetrahydrofolate. The sequence is that of Bifunctional protein FolD from Campylobacter hominis (strain ATCC BAA-381 / DSM 21671 / CCUG 45161 / LMG 19568 / NCTC 13146 / CH001A).